The sequence spans 886 residues: MTANLLNLNVDTLFEQHSVSEIDEVHKKIQSVVENKREELRTHVGERYRDLLQAADTIAAMQTSAGTLMEQVRHVQANCRSLNEQQLLGFQSTANASAKDAALKERNAGKKLQTYYGTMAQIKLLTALPELIWTHLDNDRFYAATELFIFSRHISTGLQLDGQSALMQKLPVARKQWEILRPFHVTIKQAILTALEREELLQEMTVDCLQSLLLLDKSDLSTVLKSFLNLRSSAFLNCLQSGPSEPRRVKDRILASLNVLNSTVELLDKCLLGYSLLFSRLEECASSTCPPSINRMESSERQLVHLLPEIIAGFKPQFDVPQLTPEQLGSSLQQWLDKMNALAAAHLQQVFALVTNMQTIQDIKSAARTNGRPDFVRLEQQLHLKRSQLDFYARKYVPLINARVREIIRSSWASAMKLTYEQVLLLIEAGQSQPPLQIWREQSDDLPLSLAAALSDQPKRLANRTKGYDGATIELCKRFDSHLADIVQELNVMLQEQTTRAEDKVSLIEFLRETAEEQLTEYLSNLKGLELRERPALLLALRNSLALVELCPNLKLCFCQPSSWRQWTDNSAGLGIEHWQRICGLIEKEMLSFWLVIVDDVLAGHNCEEKLPKVINHEVVLSDFALWQTLTLEQRDEDQEQSVQSTIRIPSQPRLSLQTYLHQLIQALNSVVPQTLPPKVLQAFIQRLIGKLLCHYEGLAHAECTKASQNIALQLYFDLKFLERVFAISREERTLYDQIHAQQNQLRDYIDPFDFELFAEHITAHVSRAASRLQGELGVLTPSAAAPSQGAAAASSLAHEADPNVLCLSSSGSTSLWFPLLPIVMPQAAGRVTSAERKSPIQEPVEKTATTTPTRKSGGNGARKGDSSKSKSSAASFFGMSQEWFR.

Positions 834 to 846 (SAERKSPIQEPVE) are enriched in basic and acidic residues. The tract at residues 834–886 (SAERKSPIQEPVEKTATTTPTRKSGGNGARKGDSSKSKSSAASFFGMSQEWFR) is disordered. Residue Ser839 is modified to Phosphoserine. Residues 848 to 857 (TATTTPTRKS) show a composition bias toward polar residues.

It belongs to the COG1 family. In terms of assembly, component of the conserved oligomeric Golgi complex which is composed of eight different subunits and is required for normal Golgi morphology and localization.

Its subcellular location is the golgi apparatus membrane. In terms of biological role, required for normal Golgi function. The protein is Conserved oligomeric Golgi complex subunit 1 of Drosophila melanogaster (Fruit fly).